A 325-amino-acid polypeptide reads, in one-letter code: uncharacterized protein (325 aa).

Positions 1-75 (MSQPPEHPGN…PPPGYPTHLQ (75 aa)) are disordered. Over residues 24 to 70 (YPPPGYGAPPPPPGYGPPPGTYLPPGYNAPPPPPGYGPPPGPPPPGY) the composition is skewed to pro residues. 4 consecutive transmembrane segments (helical) span residues 96 to 116 (AVTL…VIGA), 153 to 173 (IVMF…HAGI), 205 to 225 (LLIV…GLIF), and 273 to 293 (LVGE…AALI).

To M.tuberculosis Rv2560.

It is found in the cell membrane. This is an uncharacterized protein from Mycobacterium bovis (strain ATCC BAA-935 / AF2122/97).